Reading from the N-terminus, the 1217-residue chain is ATP-dependent helicase/nuclease subunit A (1217 aa).

A UvrD-like helicase ATP-binding domain is found at 10 to 475; the sequence is VIWTDAQWQS…IDLSQNFRSR (466 aa). 31-38 lines the ATP pocket; the sequence is AAAGSGKT. The UvrD-like helicase C-terminal domain occupies 476-786; it reads KEVLSTTNYI…RMMTIHSSKG (311 aa).

It belongs to the helicase family. AddA subfamily. In terms of assembly, heterodimer of AddA and AddB/RexB. The cofactor is Mg(2+).

It catalyses the reaction Couples ATP hydrolysis with the unwinding of duplex DNA by translocating in the 3'-5' direction.. The enzyme catalyses ATP + H2O = ADP + phosphate + H(+). Functionally, the heterodimer acts as both an ATP-dependent DNA helicase and an ATP-dependent, dual-direction single-stranded exonuclease. Recognizes the chi site generating a DNA molecule suitable for the initiation of homologous recombination. The AddA nuclease domain is required for chi fragment generation; this subunit has the helicase and 3' -&gt; 5' nuclease activities. This is ATP-dependent helicase/nuclease subunit A from Staphylococcus aureus (strain USA300).